The sequence spans 445 residues: Aminopeptidase S (445 aa).

A signal peptide spans 1–45 (MRPNRFSLRRSPTAVAAVALAAVLAAGAPAAQAAGAAAPTAAAAA). Residues D48 and I49 each coordinate Ca(2+). H130 and D142 together coordinate Zn(2+). E176 (proton acceptor) is an active-site residue. E177, D205, and H292 together coordinate Zn(2+). A disulfide bridge connects residues C290 and C295. Ca(2+)-binding residues include D307 and D311. A P/Homo B domain is found at 325 to 445 (GEPPTGEGVF…GYIDSWKLTF (121 aa)). Residues 330–445 (GEGVFSNTTD…GYIDSWKLTF (116 aa)) constitute a propeptide, removed in mature form.

This sequence belongs to the peptidase M28 family. M28A subfamily. Monomer. Ca(2+) is required as a cofactor. Requires Zn(2+) as cofactor. The cofactor is Mn(2+). It depends on Co(2+) as a cofactor.

It localises to the secreted. The catalysed reaction is Release of an N-terminal amino acid with a preference for large hydrophobic amino-terminus residues.. Calcium activates the enzyme, inhibited by 1,10-phenanthroline, EDTA and EGTA. End-product inhibited by L-amino acids. Non-competitively inhibited by NaF and NaH(2)PO(4). An exopeptidase specific for larger hydrophobic amino acids (especially leucine), no cleavage occurs if the next residue is proline. This is Aminopeptidase S from Streptomyces griseus subsp. griseus (strain JCM 4626 / CBS 651.72 / NBRC 13350 / KCC S-0626 / ISP 5235).